Reading from the N-terminus, the 61-residue chain is MAKVSMIIKSQRKPKFKVQQHNRCEVCGRPKAFYRKFRMCRICLRKYASIGQIPGVIKSSW.

Zn(2+)-binding residues include C24, C27, C40, and C43.

Belongs to the universal ribosomal protein uS14 family. Zinc-binding uS14 subfamily. In terms of assembly, part of the 30S ribosomal subunit. Contacts proteins S3 and S10. Zn(2+) is required as a cofactor.

Functionally, binds 16S rRNA, required for the assembly of 30S particles and may also be responsible for determining the conformation of the 16S rRNA at the A site. This Pelobacter propionicus (strain DSM 2379 / NBRC 103807 / OttBd1) protein is Small ribosomal subunit protein uS14.